A 118-amino-acid chain; its full sequence is UPF0102 protein RHA1_ro06551 (118 aa).

This sequence belongs to the UPF0102 family.

This is UPF0102 protein RHA1_ro06551 from Rhodococcus jostii (strain RHA1).